A 361-amino-acid chain; its full sequence is D-alanine--D-alanine ligase (361 aa).

One can recognise an ATP-grasp domain in the interval 134–344 (KILAQRAGVP…YTDLITKLID (211 aa)). 169–224 (ASQLGSDLFVKPSNQGSSVGVSHVTNEKEYKVALAEAFKYDDKVLVEETVHGTEVE) is an ATP binding site. Aspartate 297, glutamate 311, and asparagine 313 together coordinate Mg(2+).

This sequence belongs to the D-alanine--D-alanine ligase family. Mg(2+) serves as cofactor. The cofactor is Mn(2+).

It is found in the cytoplasm. The catalysed reaction is 2 D-alanine + ATP = D-alanyl-D-alanine + ADP + phosphate + H(+). The protein operates within cell wall biogenesis; peptidoglycan biosynthesis. Functionally, cell wall formation. The sequence is that of D-alanine--D-alanine ligase from Lactobacillus gasseri (strain ATCC 33323 / DSM 20243 / BCRC 14619 / CIP 102991 / JCM 1131 / KCTC 3163 / NCIMB 11718 / NCTC 13722 / AM63).